The sequence spans 161 residues: UPF0262 protein mll6455 (161 aa).

The protein belongs to the UPF0262 family.

The protein is UPF0262 protein mll6455 of Mesorhizobium japonicum (strain LMG 29417 / CECT 9101 / MAFF 303099) (Mesorhizobium loti (strain MAFF 303099)).